The primary structure comprises 474 residues: Mitogen-activated protein kinase pmk-3 (474 aa).

Residues 1 to 13 (MASVPSSSSLPVS) show a composition bias toward low complexity. A disordered region spans residues 1–90 (MASVPSSSSL…EEEEDILSKP (90 aa)). Residues 30 to 48 (KRSNNQSQPPESYEPNTWL) are compositionally biased toward polar residues. Over residues 52-69 (REQEQQKKLAAENIKKQS) the composition is skewed to basic and acidic residues. A Protein kinase domain is found at 114 to 419 (YDVEPNSIEY…VEEAIQHPYL (306 aa)). Residues 124–132 (LGGGSFGNV) and Lys-150 each bind ATP. Asp-252 functions as the Proton acceptor in the catalytic mechanism. Thr-285 bears the Phosphothreonine mark. The short motif at 285-287 (TQY) is the TXY element. Tyr-287 bears the Phosphotyrosine mark.

The protein belongs to the protein kinase superfamily. CMGC Ser/Thr protein kinase family. MAP kinase subfamily. As to quaternary structure, interacts with mak-2. May interact with vhp-1. May interact with uev-3. It depends on Mg(2+) as a cofactor. Dually phosphorylated on Thr-285 and Tyr-287, which activates the enzyme. In terms of tissue distribution, expressed throughout the intestine.

The protein localises to the nucleus. It localises to the cytoplasm. Its subcellular location is the cell projection. The protein resides in the axon. It is found in the dendrite. The protein localises to the cilium. It catalyses the reaction L-seryl-[protein] + ATP = O-phospho-L-seryl-[protein] + ADP + H(+). The catalysed reaction is L-threonyl-[protein] + ATP = O-phospho-L-threonyl-[protein] + ADP + H(+). Its activity is regulated as follows. Activated by phosphorylation on threonine and tyrosine. Functionally, responds to activation by environmental stress and pro-inflammatory cytokines by phosphorylating downstream targets. Involved in axon regeneration after injury, probably downstream of dlk-1 and mkk-4 and upstream of mak-2. May phosphorylate mak-2. Plays a role in cilium length regulation, possibly by reducing rab-5 mediated endocytosis. Plays a role in the formation of muscle connections, also called muscle arm extensions, between the body wall and the motor axons in the dorsal and ventral cord. In Caenorhabditis elegans, this protein is Mitogen-activated protein kinase pmk-3 (pmk-3).